A 397-amino-acid polypeptide reads, in one-letter code: Elongation factor Tu (397 aa).

The region spanning 10 to 207 (LPHCNVGTIG…TLDSYIPQPE (198 aa)) is the tr-type G domain. The interval 19 to 26 (GHVDHGKT) is G1. 19–26 (GHVDHGKT) lines the GTP pocket. Thr-26 provides a ligand contact to Mg(2+). The segment at 60 to 64 (GITIN) is G2. The tract at residues 81–84 (DCPG) is G3. GTP is bound by residues 81–85 (DCPGH) and 136–139 (NKAD). The segment at 136–139 (NKAD) is G4. The tract at residues 174–176 (SAR) is G5.

It belongs to the TRAFAC class translation factor GTPase superfamily. Classic translation factor GTPase family. EF-Tu/EF-1A subfamily. In terms of assembly, monomer.

The protein resides in the cytoplasm. The enzyme catalyses GTP + H2O = GDP + phosphate + H(+). In terms of biological role, GTP hydrolase that promotes the GTP-dependent binding of aminoacyl-tRNA to the A-site of ribosomes during protein biosynthesis. The chain is Elongation factor Tu from Pseudomonas syringae pv. tomato (strain ATCC BAA-871 / DC3000).